Here is a 451-residue protein sequence, read N- to C-terminus: UPF0761 membrane protein Hhal_0704 (451 aa).

The next 6 membrane-spanning stretches (helical) occupy residues leucine 66–phenylalanine 86, glutamate 122–isoleucine 142, phenylalanine 162–serine 182, leucine 204–valine 224, serine 228–alanine 248, and alanine 268–isoleucine 288.

It belongs to the UPF0761 family.

The protein localises to the cell inner membrane. In Halorhodospira halophila (strain DSM 244 / SL1) (Ectothiorhodospira halophila (strain DSM 244 / SL1)), this protein is UPF0761 membrane protein Hhal_0704.